We begin with the raw amino-acid sequence, 337 residues long: Outer membrane protein U (337 aa).

The signal sequence occupies residues 1 to 21 (MKKTLIALSVSAAAMATGVNA).

Belongs to the Gram-negative porin family. As to quaternary structure, homotrimer.

Its subcellular location is the cell outer membrane. In terms of biological role, forms pores that allow passive diffusion of small molecules across the outer membrane. This chain is Outer membrane protein U (ompU), found in Vibrio parahaemolyticus serotype O3:K6 (strain RIMD 2210633).